The chain runs to 399 residues: Methylmalonic aciduria type A homolog, mitochondrial (399 aa).

A mitochondrion-targeting transit peptide spans 1-15; the sequence is MVVRSLLRVSRLTSA. Residues 131–139, Asp-274, and 310–312 contribute to the GTP site; these read GSPGVGKSS and SIM.

It belongs to the SIMIBI class G3E GTPase family. ArgK/MeaB subfamily.

Its subcellular location is the mitochondrion. May have GTPase activity. May also bind and hydrolyze ATP. May function as chaperone. Likely to have a role in propionyl-CoA and adenosylcobalamin metabolism. In Caenorhabditis elegans, this protein is Methylmalonic aciduria type A homolog, mitochondrial (mmaa-1).